Reading from the N-terminus, the 319-residue chain is Cytochrome c biogenesis protein CcsA (319 aa).

8 consecutive transmembrane segments (helical) span residues A14 to I34, G36 to L56, S69 to I89, L97 to L117, I142 to I162, T227 to N247, W254 to L274, and A288 to L308.

The protein belongs to the CcmF/CycK/Ccl1/NrfE/CcsA family. In terms of assembly, may interact with Ccs1.

Its subcellular location is the plastid. The protein resides in the chloroplast thylakoid membrane. Its function is as follows. Required during biogenesis of c-type cytochromes (cytochrome c6 and cytochrome f) at the step of heme attachment. This is Cytochrome c biogenesis protein CcsA from Pyropia yezoensis (Susabi-nori).